We begin with the raw amino-acid sequence, 226 residues long: Glutathione peroxidase 3 (226 aa).

The N-terminal stretch at 1–24 (MARLLQASCLLSLLLAGFLPQSRG) is a signal peptide. Sec73 is an active-site residue. Position 73 (Sec73) is a non-standard amino acid, selenocysteine.

Belongs to the glutathione peroxidase family. In terms of assembly, homotetramer. As to expression, expressed intensively in the kidney and adrenal gland, and weakly in the cerebellum, heart, and lung. Secreted in plasma.

The protein resides in the secreted. It carries out the reaction 2 glutathione + H2O2 = glutathione disulfide + 2 H2O. The enzyme catalyses tert-butyl hydroperoxide + 2 glutathione = tert-butanol + glutathione disulfide + H2O. In terms of biological role, protects cells and enzymes from oxidative damage, by catalyzing the reduction of hydrogen peroxide, lipid peroxides and organic hydroperoxide, by glutathione. This is Glutathione peroxidase 3 from Macaca fuscata fuscata (Japanese macaque).